A 120-amino-acid polypeptide reads, in one-letter code: Large ribosomal subunit protein uL18 (120 aa).

A disordered region spans residues Met1 to Gly22. The span at Ser8 to Val20 shows a compositional bias: basic residues.

It belongs to the universal ribosomal protein uL18 family. As to quaternary structure, part of the 50S ribosomal subunit; part of the 5S rRNA/L5/L18/L25 subcomplex. Contacts the 5S and 23S rRNAs.

This is one of the proteins that bind and probably mediate the attachment of the 5S RNA into the large ribosomal subunit, where it forms part of the central protuberance. This Crocosphaera subtropica (strain ATCC 51142 / BH68) (Cyanothece sp. (strain ATCC 51142)) protein is Large ribosomal subunit protein uL18.